The following is a 162-amino-acid chain: MNINATARSLLLTEFVSAFFLAMRYFFKPKPTINYPFEKNPISPRFRGEHALRRYPNGEERCIACKLCEAICPAQAITIEAGPRRNDGTRRTVRYDIDMVKCIYCGLCQEACPVDAIVEGPNFEFATETREELYYDKARLLANGDRWEREIAKSIELDAPYR.

2 consecutive 4Fe-4S ferredoxin-type domains span residues 52-82 and 93-122; these read LRRY…IEAG and VRYD…EGPN. Cys62, Cys65, Cys68, Cys72, Cys102, Cys105, Cys108, and Cys112 together coordinate [4Fe-4S] cluster.

The protein belongs to the complex I 23 kDa subunit family. In terms of assembly, NDH-1 is composed of 14 different subunits. Subunits NuoA, H, J, K, L, M, N constitute the membrane sector of the complex. The cofactor is [4Fe-4S] cluster.

The protein resides in the cell inner membrane. It carries out the reaction a quinone + NADH + 5 H(+)(in) = a quinol + NAD(+) + 4 H(+)(out). NDH-1 shuttles electrons from NADH, via FMN and iron-sulfur (Fe-S) centers, to quinones in the respiratory chain. The immediate electron acceptor for the enzyme in this species is believed to be ubiquinone. Couples the redox reaction to proton translocation (for every two electrons transferred, four hydrogen ions are translocated across the cytoplasmic membrane), and thus conserves the redox energy in a proton gradient. This is NADH-quinone oxidoreductase subunit I 2 from Rhodopseudomonas palustris (strain HaA2).